Consider the following 1059-residue polypeptide: Pleckstrin homology domain-containing family M member 1 (1059 aa).

The 143-residue stretch at 40 to 182 (TSEDGDANTM…LSFELSYKSA (143 aa)) folds into the RUN domain. Ser-218 bears the Phosphoserine mark. 3 disordered regions span residues 218–244 (SLDSISHSSGSEDIEVQHSGHKIRRDR), 272–334 (LQEN…TPMF), and 354–411 (SEEP…DQGS). Polar residues-rich tracts occupy residues 313 to 334 (SKAQVNSAPSSGPSQESDTPMF) and 392 to 401 (GSTSDQQPSS). 3 positions are modified to phosphoserine: Ser-430, Ser-433, and Ser-488. The 92-residue stretch at 536 to 627 (GLMKLGTVAR…WLDRVREALQ (92 aa)) folds into the PH 1 domain. Residues 634–640 (EEEWVNI) carry the LIR motif. The segment at 657–1059 (LPPYSALLPE…RKYQEQNTVS (403 aa)) is interaction with RAB7A. The region spanning 686 to 780 (DAIKESLLYL…WRDLVRKVLA (95 aa)) is the PH 2 domain. The Phorbol-ester/DAG-type zinc-finger motif lies at 989–1043 (QHVYHCDLCTQRGFICQICHHQDIIFPFEFDTTVRCAECRTVFHQSCQAVVRKGC).

As to quaternary structure, interacts (via N- and C-terminus) with RAB7A (GTP-bound form). Simultaneously interacts with RAB7A and ARL8B; bringing about clustering and fusion of late endosomes and lysosomes. Interacts (via RUN domain) with ARL8B (GTP-bound form); the interaction is required for PLEKHM1 localization to lysosomes and for ARL8B function in delivery and degradation of endocytic and autophagic cargo in lysosomes. PLEKHM1 and PLEKHM2 compete for interaction with ARL8B. Interacts with ARL8A; the interaction is weaker than with ARL8B. Interacts with VPS41, VPS11, VPS18, VPS33A and VPS39; indicative for an association with the HOPS complex; the interactions with, at least, VPS41, VPS11, VPS18 and VPS33A require ARL8B. Interacts with GABARAP, GABARAPL, GABARAPL2, MAP1LC3A, MAP1LC3B and MAP1LC3C. Interacts with PAFAH1B. Interacts (via N- and C-terminus) with NDEL1. Interacts (via C-terminus) with MAP3K7. Interacts (via N- and C-terminus) with FAM98A. Interacts (via C-terminus) with DEF8; this interaction is weak but increased in a RAB7A-dependent manner. May interact with sialyl-lex-positive protein. As to expression, expressed in testis, skeletal muscle, lung, liver, spleen, brain, heart, kidney and bone. Weakly expressed in monocytes (at protein level).

It is found in the autolysosome membrane. It localises to the endosome membrane. The protein resides in the late endosome membrane. The protein localises to the lysosome membrane. Its function is as follows. Acts as a multivalent adapter protein that regulates Rab7-dependent and HOPS complex-dependent fusion events in the endolysosomal system and couples autophagic and the endocytic trafficking pathways. Acts as a dual effector of RAB7A and ARL8B that simultaneously binds these GTPases, bringing about clustering and fusion of late endosomes and lysosomes. Required for late stages of endolysosomal maturation, facilitating both endocytosis-mediated degradation of growth factor receptors and autophagosome clearance. Interaction with Arl8b is a crucial factor in the terminal maturation of autophagosomes and to mediate autophagosome-lysosome fusion. Positively regulates lysosome peripheral distribution and ruffled border formation in osteoclasts. May be involved in negative regulation of endocytic transport from early endosome to late endosome/lysosome implicating its association with Rab7. May have a role in sialyl-lex-mediated transduction of apoptotic signals. Involved in bone resorption. This Rattus norvegicus (Rat) protein is Pleckstrin homology domain-containing family M member 1.